We begin with the raw amino-acid sequence, 439 residues long: 26S proteasome regulatory subunit 4 (439 aa).

2 disordered regions span residues 1-48 and 82-104; these read MGQN…AMKL and ERLK…LRGT. Composition is skewed to basic and acidic residues over residues 12–25 and 82–102; these read GEKK…KKYE and ERLK…DDLR. ATP is bound at residue 225 to 232; sequence GPPGTGKT.

This sequence belongs to the AAA ATPase family. In terms of assembly, interacts with PSMD5.

The protein localises to the cytoplasm. It localises to the nucleus. Its function is as follows. The 26S proteasome is involved in the ATP-dependent degradation of ubiquitinated proteins. The regulatory (or ATPase) complex confers ATP dependency and substrate specificity to the 26S complex. This is 26S proteasome regulatory subunit 4 (Rpt2) from Drosophila melanogaster (Fruit fly).